The primary structure comprises 183 residues: Endoribonuclease AbiQ (183 aa).

The protein belongs to the ToxN/AbiQ toxin family. Forms a triangular heterohexamer with a single 35-nt-long repeat of RNA antitoxin AntiQ.

It localises to the cytoplasm. Toxic component of a type III toxin-antitoxin (TA) system. An endoribonuclease that is probably sequence-specific. It is neutralized by its cognate antitoxin RNA AntiQ, which has 2.8 35 nucleotide-long repeats. Cannot be cloned in L.lactis subsp. cremoris strain NZ9000 in the absence of the antitoxin gene; expression in strain NZ9000 even in the presence of antiQ inhibits growth in a bacteriostatic fashion. Confers resistance to 936 and c2 phages but not P335 phages in L.lactis, causes an abortive infection (Abi phenotype). Viral DNA is replicated but not cleaved from its concatemeric form, while the viral major structural protein is produced normally in the presence of this protein. Operon expression in E.coli confers resistance to 3 phages of the Myoviridae family (T4, RB69 and phage 2) and 1 of the Siphoviridae family (T5), but not other tested phages (T1, T3, lambda vir, HK97, Mu and pilH alpha). The presence of this operon in L.lactis subsp. lactis strain IL1403 during phage P008 infection alters the viral transcription profiles. The protein is Endoribonuclease AbiQ of Lactococcus lactis subsp. lactis (Streptococcus lactis).